The sequence spans 458 residues: Protein amnionless (458 aa).

The signal sequence occupies residues 1 to 19; the sequence is MGALGRALLWLQLCALARA. Over 20–366 the chain is Extracellular; the sequence is AYKLWVPTTD…LGSGSRAGLA (347 aa). N-linked (GlcNAc...) asparagine glycosylation is present at N35. 6 disulfides stabilise this stretch: C43/C96, C137/C213, C205/C211, C223/C249, C234/C250, and C239/C253. The segment at 67-87 is interaction with CUBN; sequence SDMLLPRDGEFVLASGAGFGA. One can recognise a VWFC domain in the interval 203–254; that stretch reads GACADPSGCVCGDAEVQPWICAALLQPLGGRCPPAACPDALRPEGQCCDLCG. A helical transmembrane segment spans residues 367 to 387; that stretch reads GGVAAGLLLLLLALAAGLLLL. The Cytoplasmic segment spans residues 388 to 458; that stretch reads RRAPRLRWTK…VNPLFAEAEA (71 aa). The tract at residues 422–446 is disordered; sequence SVGPVPRTPQPPPAQQAGSSSTSRS.

As to quaternary structure, interacts (via extracellular region) with CUBN/cubilin. This gives rise to a huge complex containing one AMN chain and three CUBN chains. N-glycosylated. In terms of processing, a soluble form arises by proteolytic removal of the membrane anchor. In terms of tissue distribution, detected in kidney (at protein level). Detected in kidney and ileum.

The protein resides in the apical cell membrane. Its subcellular location is the cell membrane. It localises to the endosome membrane. The protein localises to the membrane. It is found in the coated pit. The protein resides in the secreted. Its function is as follows. Membrane-bound component of the endocytic receptor formed by AMN and CUBN. Required for normal CUBN glycosylation and trafficking to the cell surface. The complex formed by AMN and CUBN is required for efficient absorption of vitamin B12. Required for normal CUBN-mediated protein transport in the kidney. This is Protein amnionless (AMN) from Canis lupus familiaris (Dog).